The following is a 262-amino-acid chain: Linker for activation of T-cells family member 1 (262 aa).

Topologically, residues 1-4 (MEEA) are extracellular. The chain crosses the membrane as a helical; Signal-anchor for type III membrane protein span at residues 5 to 27 (ILVPCVLGLLLLPILAMLMALCV). Residues cysteine 26 and cysteine 29 are each lipidated (S-palmitoyl cysteine). Residues 28-262 (HCHRLPGSYD…PDYENLQELN (235 aa)) lie on the Cytoplasmic side of the membrane. Threonine 39 carries the phosphothreonine modification. Phosphoserine is present on residues serine 40, serine 41, serine 43, serine 84, serine 101, serine 106, and serine 109. A disordered region spans residues 69-115 (SYPPLSQPDLLPIPRSPQPLGGSHRTPSSRRDSDGANSVASYENEGA). 5 positions are modified to phosphotyrosine: tyrosine 110, tyrosine 156, tyrosine 161, tyrosine 200, and tyrosine 220. Residues 161 to 164 (YLVV) form an interaction with PLCG1 region. Interaction with GRB2, GRAP2 and PIK3R1 regions lie at residues 200–203 (YVNV) and 220–223 (YVNV). Positions 206–262 (SGESAEASLDGSREYVNVSQELHPGAAKTEPAALSSQEAEEVEEEGAPDYENLQELN) are disordered. A phosphoserine mark is found at serine 224, serine 240, and serine 241. Acidic residues predominate over residues 243–253 (EAEEVEEEGAP). Residue tyrosine 255 is modified to Phosphotyrosine.

As to quaternary structure, when phosphorylated, interacts directly with the PIK3R1 subunit of phosphoinositide 3-kinase and the SH2 domains of GRB2, GRAP, GRAP2, PLCG1 and PLCG2. Interacts indirectly with CBL, SOS, VAV, and LCP2. Interacts with SHB, SKAP2 and CLNK. Interacts with FCGR1A. Interacts with GRB2, PLCG1 and THEMIS upon TCR activation in thymocytes. Interacts with THEMIS2. (Microbial infection) Interacts with herpes virus 1/HHV-1 protein US3; this interaction prevents the interaction between LAT and TRAF6. In terms of processing, phosphorylated on tyrosines by ZAP70 upon TCR activation, or by SYK upon other immunoreceptor activation; which leads to the recruitment of multiple signaling molecules. Is one of the most prominently tyrosine-phosphorylated proteins detected following TCR engagement. May be dephosphorylated by PTPRJ. Phosphorylated by ITK leading to the recruitment of VAV1 to LAT-containing complexes. Palmitoylation of Cys-26 and Cys-29 is required for raft targeting and efficient phosphorylation. Post-translationally, 'Lys-63'-linked ubiquitinated by TRAF6. In terms of tissue distribution, expressed in thymus, T-cells, NK cells, mast cells and, at lower levels, in spleen. Present in T-cells but not B-cells (at protein level).

Its subcellular location is the cell membrane. In terms of biological role, required for TCR (T-cell antigen receptor)- and pre-TCR-mediated signaling, both in mature T-cells and during their development. Involved in FCGR3 (low affinity immunoglobulin gamma Fc region receptor III)-mediated signaling in natural killer cells and FCER1 (high affinity immunoglobulin epsilon receptor)-mediated signaling in mast cells. Couples activation of these receptors and their associated kinases with distal intracellular events such as mobilization of intracellular calcium stores, PKC activation, MAPK activation or cytoskeletal reorganization through the recruitment of PLCG1, GRB2, GRAP2, and other signaling molecules. This chain is Linker for activation of T-cells family member 1 (LAT), found in Homo sapiens (Human).